The chain runs to 3015 residues: Genome polyprotein (3015 aa).

Residue S2 is modified to N-acetylserine; by host. Positions 2 to 23 are interaction with STAT1; it reads STLPKPQRKTKRNTNRRPMDVK. Residues 2 to 58 are interaction with EIF2AK2/PKR; that stretch reads STLPKPQRKTKRNTNRRPMDVKFPGGGQIVGGVYLLPRRGPRLGVRATRKTSERSQP. The segment at 2-59 is interaction with DDX3X; sequence STLPKPQRKTKRNTNRRPMDVKFPGGGQIVGGVYLLPRRGPRLGVRATRKTSERSQPR. The disordered stretch occupies residues 2-75; it reads STLPKPQRKT…PKARQPIGRS (74 aa). At 2–168 the chain is on the cytoplasmic side; it reads STLPKPQRKT…EDGVNYATGN (167 aa). 2 short sequence motifs (nuclear localization signal) span residues 5–13 and 38–43; these read PKPQRKTKR and PRRGPR. A compositionally biased stretch (basic residues) spans 7–16; it reads PQRKTKRNTN. Positions 32-47 are enriched in low complexity; it reads GGVYLLPRRGPRLGVR. The residue at position 53 (S53) is a Phosphoserine; by host. 2 short sequence motifs (nuclear localization signal) span residues 58–64 and 66–71; these read PRGRRQP and PKARQP. Phosphoserine; by host occurs at positions 99 and 116. Residues 112 to 152 are important for endoplasmic reticulum and mitochondrial localization; the sequence is PRRRSRNLGKVIDTLTCGLADLMGYIPVLGGPLGGVAAALA. An interaction with APOA2 region spans residues 122–173; it reads VIDTLTCGLADLMGYIPVLGGPLGGVAAALAHGVRAIEDGVNYATGNLPGCS. An important for lipid droplets localization region spans residues 164-167; it reads YATG. Residues 169–189 form a helical membrane-spanning segment; that stretch reads LPGCSFSIFLLALLSCLTTPA. A propeptide spans 178–191 (ER anchor for the core protein, removed in mature form by host signal peptidase); it reads LLALLSCLTTPASA. The Lumenal segment spans residues 190 to 358; the sequence is SAIQVRNASG…TGAHWGVLGA (169 aa). N-linked (GlcNAc...) asparagine; by host glycosylation is found at N196, N209, N234, and N250. The tract at residues 265–296 is important for fusion; sequence LVGAAAFCSAMYIGDLCGSVFLVGQLFTFRPK. N305 carries an N-linked (GlcNAc...) asparagine; by host glycan. The chain crosses the membrane as a helical span at residues 359 to 379; it reads LLYFSMVANWAKVIAVLFLFA. At 380–726 the chain is on the lumenal side; sequence GADATTYTGS…WEYVVLAFLV (347 aa). The interval 385–411 is HVR1; sequence TYTGSAVSSTTGAFVSLFSPGPTQNLQ. N-linked (GlcNAc...) (high mannose) asparagine; by host glycans are attached at residues N416, N422, and N429. Intrachain disulfides connect C428/C552, C451/C458, C486/C494, and C503/C508. The N-linked (GlcNAc...) asparagine; by host glycan is linked to N447. The interval 474-478 is HVR2; sequence VNISG. N475 carries N-linked (GlcNAc...) asparagine; by host glycosylation. The segment at 480–493 is CD81-binding 1; it reads SEDKPYCWHYAPRP. N-linked (GlcNAc...) asparagine; by host glycosylation occurs at N532. The interval 544-551 is CD81-binding 2; sequence PPLGAWFG. N556 carries N-linked (GlcNAc...) asparagine; by host glycosylation. Disulfide bonds link C564–C569, C582–C586, C598–C621, and C608–C645. Residues N624 and N646 are each glycosylated (N-linked (GlcNAc...) (high mannose) asparagine; by host). Cysteines 653 and 678 form a disulfide. Residues 661-672 form a PKR/eIF2-alpha phosphorylation homology domain (PePHD) region; that stretch reads FEMSPLLFSTTQ. Residues 727-747 traverse the membrane as a helical segment; it reads LADARVCACLWLMFLVGQAEA. Residues 748–758 are Lumenal-facing; sequence ALENVIVLNAA. The chain crosses the membrane as a helical span at residues 759–779; sequence SAASCQGLLWGLIFICCAWHV. The Cytoplasmic segment spans residues 780-783; the sequence is RGRA. A helical membrane pass occupies residues 784–804; that stretch reads VPVTTYALLQLWPLLLLILAL. At 805 to 814 the chain is on the lumenal side; the sequence is PRRAYAFDSE. The chain crosses the membrane as a helical span at residues 815–835; that stretch reads QAASAGLLVLGLITIFTLTPA. Residues 836-882 are Cytoplasmic-facing; sequence YKQLLISMLWWIQYFIALTEAQLHQWVPSLLVRGGRDAVILLACLFH. A helical membrane pass occupies residues 883–903; the sequence is PQLGFEVTKILLALLGPLYLL. Residues 904–929 lie on the Lumenal side of the membrane; it reads QYSLLKTPYFVRAHILLRACMFFRGM. A Peptidase C18 domain is found at 904 to 1027; the sequence is QYSLLKTPYF…DVKGKGWRLL (124 aa). Positions 905-1207 are protease NS2-3; the sequence is YSLLKTPYFV…PVESMQSSQR (303 aa). A lipid anchor (S-palmitoyl cysteine; by host) is attached at C923. The chain crosses the membrane as a helical span at residues 930-950; sequence ARGRYAQAILLRIGAWTGTYI. Residues 930–950 form an interaction with host SCPS1 region; the sequence is ARGRYAQAILLRIGAWTGTYI. Over 951–1658 the chain is Cytoplasmic; the sequence is YDHLAPLSDW…CMSADLEVIT (708 aa). Active-site for protease NS2 activity; shared with dimeric partner residues include H953, E973, and C994. The 182-residue stretch at 1028–1209 folds into the Peptidase S29 domain; that stretch reads APITAYAQQT…ESMQSSQRSP (182 aa). Residue D1108 is the Charge relay system; for serine protease NS3 activity of the active site. Zn(2+)-binding residues include C1124 and C1126. The active-site Charge relay system; for serine protease NS3 activity is the S1166. Residues C1172 and H1176 each contribute to the Zn(2+) site. The Helicase ATP-binding domain occupies 1218–1370; the sequence is PAVPQTYQVG…PNITESALPT (153 aa). Position 1231 to 1238 (1231 to 1238) interacts with ATP; it reads APTGSGKS. Positions 1238 and 1318 each coordinate Mg(2+). The short motif at 1317–1320 is the DECH box element; the sequence is DECH. The RNA-binding stretch occupies residues 1487-1499; sequence QRRGRTGRGKHGV. A helical membrane pass occupies residues 1659 to 1679; it reads STWVLVGGVVAALAAYCLSVG. Residues 1680-1691 are NS3-binding; the sequence is CVVICGRISTSG. Topologically, residues 1680–1806 are cytoplasmic; sequence CVVICGRIST…SLTSPLSTHQ (127 aa). A helical transmembrane segment spans residues 1807-1827; sequence TLLLNILGGWVASQLANPTAS. At 1828–1829 the chain is on the lumenal side; sequence TA. The chain crosses the membrane as a helical span at residues 1830–1850; sequence FVVSGLAGAAVGSIGLGRVIV. D1851 is a topological domain (cytoplasmic). A helical membrane pass occupies residues 1852–1872; that stretch reads VLAGYGAGVSGALVAFKIMCG. Topologically, residues 1873–1882 are lumenal; that stretch reads ETPSAEDMVN. The helical transmembrane segment at 1883–1903 threads the bilayer; the sequence is LLPALLSPGALVVGVVCAAIL. The Cytoplasmic portion of the chain corresponds to 1904-1973; it reads RRHAGPSEGA…WINTDWSTPC (70 aa). C1973 is lipidated: S-palmitoyl cysteine; by host. Residues 1974–2003 lie within the membrane without spanning it; it reads SSSWLRDIWDWVCEVLSDFKTWLKAKLVPA. Residues 2004–2994 are Cytoplasmic-facing; the sequence is LPGVPFLSCQ…YHSASRARPR (991 aa). Zn(2+) contacts are provided by C2012, C2030, C2032, and C2053. The tract at residues 2121 to 2209 is FKBP8-binding; the sequence is EFFTEVDGVR…ASSSASQLSA (89 aa). Residues 2121–2334 are transcriptional activation; it reads EFFTEVDGVR…PIPPPRRKKV (214 aa). Residues 2136 to 2140 form an interaction with non-structural protein 4A region; it reads PRCKP. The interaction with host SKP2 stretch occupies residues 2190–2442; the sequence is RLARGSPPSL…ALVTPCAAEE (253 aa). Phosphoserine; by host is present on residues S2195, S2198, S2202, S2205, S2208, and S2211. The interval 2211–2250 is ISDR; sequence SLKATCTMHGAHPDAELIEANLLWRQEMGGNITRVESENK. The interaction with EIF2AK2/PKR stretch occupies residues 2211–2276; it reads SLKATCTMHG…REMSVPAECH (66 aa). The NS4B-binding stretch occupies residues 2250–2308; the sequence is KVVILDSFDPLVPEFEEREMSVPAECHRPRRPKFPPALPIWATPGYNPPVLETWKSPTY. Residues 2301–2378 are V3; sequence ETWKSPTYEP…PDHSTESSEH (78 aa). 2 disordered regions span residues 2319–2338 and 2352–2413; these read PPSG…VQLD and KTFE…SWST. Residues 2324–2327 carry the SH3-binding motif; that stretch reads PPIP. The short motif at 2329–2337 is the Nuclear localization signal element; the sequence is PRRKKVVQL. A Glycyl lysine isopeptide (Lys-Gly) (interchain with G-Cter in ubiquitin) cross-link involves residue K2352. The segment covering 2355–2365 has biased composition (polar residues); that stretch reads ETPSSPTTGYG. Positions 2368–2383 are enriched in basic and acidic residues; the sequence is QPDHSTESSEHDRDDG. Residues S2453 and S2466 each carry the phosphoserine; by host modification. Positions 2638 to 2756 constitute a RdRp catalytic domain; sequence PMGFSYDTRC…VTESAGVNED (119 aa). Mg(2+) contacts are provided by D2644, D2742, and D2743. A helical transmembrane segment spans residues 2995–3015; sequence FLLLCLLLLSVGVGIFLLPAR.

Belongs to the hepacivirus polyprotein family. In terms of assembly, homooligomer. Interacts with E1 (via C-terminus). Interacts with the non-structural protein 5A. Interacts (via N-terminus) with host STAT1 (via SH2 domain); this interaction results in decreased STAT1 phosphorylation and ubiquitin-mediated proteasome-dependent STAT1 degradation, leading to decreased IFN-stimulated gene transcription. Interacts with host STAT3; this interaction constitutively activates STAT3. Interacts with host LTBR receptor. Interacts with host TNFRSF1A receptor and possibly induces apoptosis. Interacts with host HNRPK. Interacts with host YWHAE. Interacts with host UBE3A/E6AP. Interacts with host DDX3X. Interacts with host APOA2. Interacts with host RXRA protein. Interacts with host SP110 isoform 3/Sp110b; this interaction sequesters the transcriptional corepressor SP110 away from the nucleus. Interacts with host CREB3 nuclear transcription protein; this interaction triggers cell transformation. Interacts with host ACY3. Interacts with host C1QR1. Interacts with host RBM24; this interaction, which enhances the interaction of the mature core protein with 5'-UTR, may inhibit viral translation and favor replication. Interacts with host EIF2AK2/PKR; this interaction induces the autophosphorylation of EIF2AK2. Part of the viral assembly initiation complex composed of NS2, E1, E2, NS3, NS4A, NS5A and the mature core protein. Forms a heterodimer with envelope glycoprotein E2. Interacts with mature core protein. Interacts with protease NS2. The heterodimer E1/E2 interacts with host CLDN1; this interaction plays a role in viral entry into host cell. Interacts with host SPSB2 (via C-terminus). Part of the viral assembly initiation complex composed of NS2, E1, E2, NS3, NS4A, NS5A and the mature core protein. Interacts with host NEURL3; this interaction prevents E1 binding to glycoprotein E2. As to quaternary structure, forms a heterodimer with envelope glycoprotein E1. Interacts with host CD81 and SCARB1 receptors; these interactions play a role in viral entry into host cell. Interacts with host EIF2AK2/PKR; this interaction inhibits EIF2AK2 and probably allows the virus to evade the innate immune response. Interacts with host CD209/DC-SIGN and CLEC4M/DC-SIGNR. Interact with host SPCS1; this interaction is essential for viral particle assembly. Interacts with protease NS2. The heterodimer E1/E2 interacts with host CLDN1; this interaction plays a role in viral entry into host cell. Part of the viral assembly initiation complex composed of NS2, E1, E2, NS3, NS4A, NS5A and the mature core protein. Interacts with host SLC3A2/4F2hc; the interaction may facilitate viral entry into host cell. Interacts with human PLSCR1. In terms of assembly, homohexamer. Homoheptamer. Interacts with protease NS2. Homodimer. Interacts with host SPCS1; this interaction is essential for viral particle assembly. Interacts with envelope glycoprotein E1. Interacts with envelope glycoprotein E2. Interacts with viroporin p7. Interacts with serine protease/helicase NS3. Part of the replication complex composed of NS2, NS3, NS4A, NS4B, NS5A and the RNA-directed RNA polymerase embedded in an ER-derived membranous web. Part of the viral assembly initiation complex composed of NS2, E1, E2, NS3, NS4A, NS5A and the mature core protein. As to quaternary structure, interacts with protease NS2. Interacts with non-structural protein 4A; this interaction stabilizes the folding of NS3 serine protease. NS3-NS4A interaction is essential for NS3 activation and allows membrane anchorage of the latter. NS3/NS4A complex also prevents phosphorylation of host IRF3, thus preventing the establishment of dsRNA induced antiviral state. Interacts with host MAVS; this interaction leads to the cleavage and inhibition of host MAVS. Interacts with host TICAM1; this interaction leads to the cleavage and inhibition of host TICAM1. Interacts with host TANK-binding kinase/TBK1; this interaction results in the inhibition of the association between TBK1 and IRF3, which leads to the inhibition of IRF3 activation. Interacts with host RBM24. Part of the replication complex composed of NS2, NS3, NS4A, NS4B, NS5A and the RNA-directed RNA polymerase embedded in an ER-derived membranous web. Part of the viral assembly initiation complex composed of NS2, E1, E2, NS3, NS4A, NS5A and the mature core protein. In terms of assembly, interacts with NS3 serine protease; this interaction stabilizes the folding of NS3 serine protease. NS3-NS4A interaction is essential for NS3 activation and allows membrane anchorage of the latter. Interacts with non-structural protein 5A (via N-terminus). Part of the replication complex composed of NS2, NS3, NS4A, NS4B, NS5A and the RNA-directed RNA polymerase embedded in an ER-derived membranous web. Part of the viral assembly initiation complex composed of NS2, E1, E2, NS3, NS4A, NS5A and the mature core protein. Homomultimer. Interacts with non-structural protein NS5A. Interacts with host PLA2G4C; this interaction likely initiates the recruitment of replication complexes to lipid droplets. Interacts with host STING; this interaction disrupts the interaction between STING and TBK1 thereby suppressing the interferon signaling. Part of the replication complex composed of NS2, NS3, NS4A, NS4B, NS5A and the RNA-directed RNA polymerase embedded in an ER-derived membranous web. As to quaternary structure, monomer. Homodimer; dimerization is required for RNA-binding. Interacts with the mature core protein. Interacts (via N-terminus) with non-structural protein 4A. Interacts with non-structural protein 4B. Interacts (via region D2) with RNA-directed RNA polymerase. Part of the viral assembly initiation complex composed of NS2, E1, E2, NS3, NS4A, NS5A and the mature core protein. Part of the replication complex composed of NS2, NS3, NS4A, NS4B, NS5A and the RNA-directed RNA polymerase embedded in an ER-derived membranous web. Interacts with host GRB2. Interacts with host BIN1. Interacts with host PIK3R1. Interacts with host SRCAP. Interacts with host FKBP8. Interacts (via C-terminus) with host VAPB (via MSP domain). Interacts with host EIF2AK2/PKR; this interaction leads to disruption of EIF2AK2 dimerization by NS5A and probably allows the virus to evade the innate immune response. Interacts (via N-terminus) with host PACSIN2 (via N-terminus); this interaction attenuates protein kinase C alpha-mediated phosphorylation of PACSIN2 by disrupting the interaction between PACSIN2 and PRKCA. Interacts (via N-terminus) with host SRC kinase (via SH2 domain). Interacts with most Src-family kinases. Interacts with host IFI27 and SKP2; promotes the ubiquitin-mediated proteasomal degradation of NS5A. Interacts with host GPS2. Interacts with host TNFRSF21; this interaction allows the modulation by the virus of JNK, p38 MAPK, STAT3, and Akt signaling pathways in a DR6-dependent manner. Interacts (via N-terminus) with host CIDEB (via N-terminus); this interaction seems to regulate the association of HCV particles with APOE. Interacts with host CHKA/Choline Kinase-alpha; CHKA bridges host PI4KA and NS5A and potentiates NS5A-stimulated PI4KA activity, which then facilitates the targeting of the ternary complex to the ER for viral replication. Interacts with host SPSB2 (via C-terminus); this interaction targets NS5A for ubiquitination and degradation. Interacts with host RAB18; this interaction may promote the association of NS5A and other replicase components with lipid droplets. Interacts (via region D2) with host PPIA/CYPA; the interaction stimulates RNA-binding ability of NS5A and is dependent on the peptidyl-prolyl cis-trans isomerase activity of PPIA/CYPA. Interacts with host TRIM14; this interaction induces the degradation of NS5A. In terms of assembly, homooligomer. Interacts with non-structural protein 5A. Interacts with host VAPB. Interacts with host PRK2/PKN2. Interacts with host HNRNPA1 and SEPT6; these interactions facilitate viral replication. Part of the replication complex composed of NS2, NS3, NS4A, NS4B, NS5A and the RNA-directed RNA polymerase. Requires Zn(2+) as cofactor. It depends on Mg(2+) as a cofactor. Specific enzymatic cleavages in vivo yield mature proteins. The structural proteins, core, E1, E2 and p7 are produced by proteolytic processing by host signal peptidases. The core protein precursor is synthesized as a 23 kDa, which is retained in the ER membrane through the hydrophobic signal peptide. Cleavage by the signal peptidase releases the 21 kDa mature core protein. The cleavage of the core protein precursor occurs between aminoacids 176 and 188 but the exact cleavage site is not known. Some degraded forms of the core protein appear as well during the course of infection. The other proteins (p7, NS2, NS3, NS4A, NS4B, NS5A and NS5B) are cleaved by the viral proteases. Autoprocessing between NS2 and NS3 is mediated by the NS2 cysteine protease catalytic domain and regulated by the NS3 N-terminal domain. In terms of processing, phosphorylated by host PKC and PKA. Post-translationally, ubiquitinated; mediated by UBE3A and leading to core protein subsequent proteasomal degradation. Highly N-glycosylated. In terms of processing, palmitoylation is required for NS2/3 autoprocessing and E2 recruitment to membranes. Post-translationally, palmitoylated. This modification may play a role in its polymerization or in protein-protein interactions. Phosphorylated on serines in a basal form termed p56. p58 is a hyperphosphorylated form of p56. p56 and p58 coexist in the cell in roughly equivalent amounts. Hyperphosphorylation is dependent on the presence of NS4A. Host CSNK1A1/CKI-alpha or RPS6KB1 kinases may be responsible for NS5A phosphorylation. In terms of processing, tyrosine phosphorylation is essential for the interaction with host SRC. Post-translationally, ubiquitinated. Ubiquitination, most probably at Lys-2352, mediated by host IFI27 and SKP2 leads to proteasomal degradation, restricting viral infection. Ubiquitination by host TRIM22 leads to interruption of viral replication. The N-terminus is phosphorylated by host PRK2/PKN2.

The protein localises to the host endoplasmic reticulum membrane. The protein resides in the host mitochondrion membrane. It localises to the virion. Its subcellular location is the host cytoplasm. It is found in the host nucleus. The protein localises to the host lipid droplet. The protein resides in the virion membrane. It localises to the host mitochondrion. Its subcellular location is the host cell membrane. It is found in the host perinuclear region. The enzyme catalyses Hydrolysis of four peptide bonds in the viral precursor polyprotein, commonly with Asp or Glu in the P6 position, Cys or Thr in P1 and Ser or Ala in P1'.. The catalysed reaction is a ribonucleoside 5'-triphosphate + H2O = a ribonucleoside 5'-diphosphate + phosphate + H(+). It carries out the reaction ATP + H2O = ADP + phosphate + H(+). It catalyses the reaction RNA(n) + a ribonucleoside 5'-triphosphate = RNA(n+1) + diphosphate. With respect to regulation, inhibited by the antiviral drug hexamethylene amiloride. Inhibition by amantadine appears to be genotype-dependent. Also inhibited by long-alkyl-chain iminosugar derivatives. Activity is up-regulated by PRK2/PKN2-mediated phosphorylation. Its function is as follows. Packages viral RNA to form a viral nucleocapsid, and promotes virion budding. Participates in the viral particle production as a result of its interaction with the non-structural protein 5A. Binds RNA and may function as a RNA chaperone to induce the RNA structural rearrangements taking place during virus replication. Modulates viral translation initiation by interacting with viral IRES and 40S ribosomal subunit. Affects various cell signaling pathways, host immunity and lipid metabolism. Prevents the establishment of cellular antiviral state by blocking the interferon-alpha/beta (IFN-alpha/beta) and IFN-gamma signaling pathways and by blocking the formation of phosphorylated STAT1 and promoting ubiquitin-mediated proteasome-dependent degradation of STAT1. Activates STAT3 leading to cellular transformation. Regulates the activity of cellular genes, including c-myc and c-fos. May repress the promoter of p53, and sequester CREB3 and SP110 isoform 3/Sp110b in the cytoplasm. Represses cell cycle negative regulating factor CDKN1A, thereby interrupting an important check point of normal cell cycle regulation. Targets transcription factors involved in the regulation of inflammatory responses and in the immune response: suppresses TNF-induced NF-kappa-B activation, and activates AP-1. Binds to dendritic cells (DCs) via C1QR1, resulting in down-regulation of T-lymphocytes proliferation. Alters lipid metabolism by interacting with hepatocellular proteins involved in lipid accumulation and storage. Induces up-regulation of FAS promoter activity, and thereby contributes to the increased triglyceride accumulation in hepatocytes (steatosis). Forms a heterodimer with envelope glycoprotein E2, which mediates virus attachment to the host cell, virion internalization through clathrin-dependent endocytosis and fusion with host membrane. Fusion with the host cell is most likely mediated by both E1 and E2, through conformational rearrangements of the heterodimer required for fusion rather than a classical class II fusion mechanism. E1/E2 heterodimer binds host apolipoproteins such as APOB and ApoE thereby forming a lipo-viro-particle (LVP). APOE associated to the LVP allows the initial virus attachment to cell surface receptors such as the heparan sulfate proteoglycans (HSPGs), syndecan-1 (SDC1), syndecan-1 (SDC2), the low-density lipoprotein receptor (LDLR) and scavenger receptor class B type I (SCARB1). The cholesterol transfer activity of SCARB1 allows E2 exposure and binding of E2 to SCARB1 and the tetraspanin CD81. E1/E2 heterodimer binding on CD81 activates the epithelial growth factor receptor (EGFR) signaling pathway. Diffusion of the complex E1-E2-EGFR-SCARB1-CD81 to the cell lateral membrane allows further interaction with Claudin 1 (CLDN1) and occludin (OCLN) to finally trigger HCV entry. In terms of biological role, forms a heterodimer with envelope glycoprotein E1, which mediates virus attachment to the host cell, virion internalization through clathrin-dependent endocytosis and fusion with host membrane. Fusion with the host cell is most likely mediated by both E1 and E2, through conformational rearrangements of the heterodimer required for fusion rather than a classical class II fusion mechanism. The interaction between envelope glycoprotein E2 and host apolipoprotein E/APOE allows the proper assembly, maturation and infectivity of the viral particles. This interaction is probably promoted via the up-regulation of cellular autophagy by the virus. E1/E2 heterodimer binds host apolipoproteins such as APOB and APOE thereby forming a lipo-viro-particle (LVP). APOE associated to the LVP allows the initial virus attachment to cell surface receptors such as the heparan sulfate proteoglycans (HSPGs), syndecan-1 (SDC1), syndecan-1 (SDC2), the low-density lipoprotein receptor (LDLR) and scavenger receptor class B type I (SCARB1). The cholesterol transfer activity of SCARB1 allows E2 exposure and binding of E2 to SCARB1 and the tetraspanin CD81. E1/E2 heterodimer binding on CD81 activates the epithelial growth factor receptor (EGFR) signaling pathway. Diffusion of the complex E1-E2-EGFR-SCARB1-CD81 to the cell lateral membrane allows further interaction with Claudin 1 (CLDN1) and occludin (OCLN) to finally trigger HCV entry. Inhibits host EIF2AK2/PKR activation, preventing the establishment of an antiviral state. Viral ligand for CD209/DC-SIGN and CLEC4M/DC-SIGNR, which are respectively found on dendritic cells (DCs), and on liver sinusoidal endothelial cells and macrophage-like cells of lymph node sinuses. These interactions allow the capture of circulating HCV particles by these cells and subsequent facilitated transmission to permissive cells such as hepatocytes and lymphocyte subpopulations. The interaction between E2 and host amino acid transporter complex formed by SLC3A2 and SLC7A5/LAT1 may facilitate viral entry into host cell. Functionally, ion channel protein that acts as a viroporin and plays an essential role in the assembly, envelopment and secretion of viral particles. Regulates the host cell secretory pathway, which induces the intracellular retention of viral glycoproteins and favors assembly of viral particles. Creates a pore in acidic organelles and releases Ca(2+) and H(+) in the cytoplasm of infected cells, leading to a productive viral infection. High levels of cytoplasmic Ca(2+) may trigger membrane trafficking and transport of viral ER-associated proteins to viroplasms, sites of viral genome replication. This ionic imbalance induces the assembly of the inflammasome complex, which triggers the maturation of pro-IL-1beta into IL-1beta through the action of caspase-1. Targets also host mitochondria and induces mitochondrial depolarization. In addition of its role as a viroporin, acts as a lipid raft adhesion factor. Its function is as follows. Cysteine protease required for the proteolytic auto-cleavage between the non-structural proteins NS2 and NS3. The N-terminus of NS3 is required for the function of NS2 protease (active region NS2-3). Promotes the initiation of viral particle assembly by mediating the interaction between structural and non-structural proteins. Displays three enzymatic activities: serine protease with a chymotrypsin-like fold, NTPase and RNA helicase. NS3 serine protease, in association with NS4A, is responsible for the cleavages of NS3-NS4A, NS4A-NS4B, NS4B-NS5A and NS5A-NS5B. The NS3/NS4A complex prevents phosphorylation of host IRF3, thus preventing the establishment of dsRNA induced antiviral state. The NS3/NS4A complex induces host amino acid transporter component SLC3A2, thus contributing to HCV propagation. NS3 RNA helicase binds to RNA and unwinds both dsDNA and dsRNA in the 3' to 5' direction, and likely resolves RNA complicated stable secondary structures in the template strand. Binds a single ATP and catalyzes the unzipping of a single base pair of dsRNA. Inhibits host antiviral proteins TBK1 and IRF3 thereby preventing the establishment of an antiviral state. Cleaves host MAVS/CARDIF thereby preventing the establishment of an antiviral state. Cleaves host TICAM1/TRIF, thereby disrupting TLR3 signaling and preventing the establishment of an antiviral state. In terms of biological role, peptide cofactor which forms a non-covalent complex with the N-terminal of NS3 serine protease. The NS3/NS4A complex prevents phosphorylation of host IRF3, thus preventing the establishment of dsRNA induced antiviral state. The NS3/NS4A complex induces host amino acid transporter component SLC3A2, thus contributing to HCV propagation. Functionally, induces a specific membrane alteration that serves as a scaffold for the virus replication complex. This membrane alteration gives rise to the so-called ER-derived membranous web that contains the replication complex. NS4B self-interaction contributes to its function in membranous web formation. Promotes host TRIF protein degradation in a CASP8-dependent manner thereby inhibiting host TLR3-mediated interferon signaling. Disrupts the interaction between STING and TBK1 contributing to the inhibition of interferon signaling. Its function is as follows. Phosphorylated protein that is indispensable for viral replication and assembly. Both hypo- and hyperphosphorylated states are required for the viral life cycle. The hyperphosphorylated form of NS5A is an inhibitor of viral replication. Involved in RNA-binding and especially in binding to the viral genome. Zinc is essential for RNA-binding. Participates in the viral particle production as a result of its interaction with the mature viral core protein. Its interaction with host VAPB may target the viral replication complex to vesicles. Down-regulates viral IRES translation initiation. Mediates interferon resistance, presumably by interacting with and inhibiting host EIF2AK2/PKR. Prevents BIN1-induced apoptosis. Acts as a transcriptional activator of some host genes important for viral replication when localized in the nucleus. Via the interaction with host PACSIN2, modulates lipid droplet formation in order to promote virion assembly. Modulates TNFRSF21/DR6 signaling pathway for viral propagation. RNA-dependent RNA polymerase that performs primer-template recognition and RNA synthesis during viral replication. Initiates RNA transcription/replication at a flavin adenine dinucleotide (FAD), resulting in a 5'- FAD cap on viral RNAs. In this way, recognition of viral 5' RNA by host pattern recognition receptors can be bypassed, thereby evading activation of antiviral pathways. This Hepatitis C virus genotype 6h (isolate VN004) (HCV) protein is Genome polyprotein.